A 342-amino-acid polypeptide reads, in one-letter code: Nicotinate-nucleotide--dimethylbenzimidazole phosphoribosyltransferase (342 aa).

The active-site Proton acceptor is the E311.

This sequence belongs to the CobT family.

The enzyme catalyses 5,6-dimethylbenzimidazole + nicotinate beta-D-ribonucleotide = alpha-ribazole 5'-phosphate + nicotinate + H(+). Its pathway is nucleoside biosynthesis; alpha-ribazole biosynthesis; alpha-ribazole from 5,6-dimethylbenzimidazole: step 1/2. In terms of biological role, catalyzes the synthesis of alpha-ribazole-5'-phosphate from nicotinate mononucleotide (NAMN) and 5,6-dimethylbenzimidazole (DMB). In Photobacterium profundum (strain SS9), this protein is Nicotinate-nucleotide--dimethylbenzimidazole phosphoribosyltransferase.